A 102-amino-acid polypeptide reads, in one-letter code: Ferredoxin, 2Fe-2S (102 aa).

[2Fe-2S] cluster contacts are provided by cysteine 11, cysteine 24, cysteine 56, and cysteine 60.

Belongs to the 2Fe2S Shethna-type ferredoxin family. Requires [2Fe-2S] cluster as cofactor.

Its function is as follows. Ferredoxins are iron-sulfur proteins that transfer electrons in a wide variety of metabolic reactions. The protein is Ferredoxin, 2Fe-2S of Clostridium pasteurianum.